We begin with the raw amino-acid sequence, 62 residues long: Large ribosomal subunit protein bL28 (62 aa).

This sequence belongs to the bacterial ribosomal protein bL28 family.

This is Large ribosomal subunit protein bL28 from Acholeplasma laidlawii (strain PG-8A).